Here is a 178-residue protein sequence, read N- to C-terminus: Bifunctional protein PyrR (178 aa).

Residues 99 to 111 (VIIVDDVLYTCRT) carry the PRPP-binding motif.

This sequence belongs to the purine/pyrimidine phosphoribosyltransferase family. PyrR subfamily. In terms of assembly, homodimer and homohexamer; in equilibrium.

The catalysed reaction is UMP + diphosphate = 5-phospho-alpha-D-ribose 1-diphosphate + uracil. In terms of biological role, regulates transcriptional attenuation of the pyrimidine nucleotide (pyr) operon by binding in a uridine-dependent manner to specific sites on pyr mRNA. This disrupts an antiterminator hairpin in the RNA and favors formation of a downstream transcription terminator, leading to a reduced expression of downstream genes. Functionally, also displays a weak uracil phosphoribosyltransferase activity which is not physiologically significant. In Clostridium perfringens (strain ATCC 13124 / DSM 756 / JCM 1290 / NCIMB 6125 / NCTC 8237 / Type A), this protein is Bifunctional protein PyrR.